Reading from the N-terminus, the 307-residue chain is Quinolinate synthase (307 aa).

His20 and Ser37 together coordinate iminosuccinate. Cys82 contributes to the [4Fe-4S] cluster binding site. Residues 108 to 110 and Ser125 each bind iminosuccinate; that span reads YIN. [4Fe-4S] cluster is bound at residue Cys168. Residues 194-196 and Thr219 each bind iminosuccinate; that span reads HPE. [4Fe-4S] cluster is bound at residue Cys264.

It belongs to the quinolinate synthase family. Type 2 subfamily. It depends on [4Fe-4S] cluster as a cofactor.

The protein resides in the cytoplasm. It carries out the reaction iminosuccinate + dihydroxyacetone phosphate = quinolinate + phosphate + 2 H2O + H(+). It functions in the pathway cofactor biosynthesis; NAD(+) biosynthesis; quinolinate from iminoaspartate: step 1/1. In terms of biological role, catalyzes the condensation of iminoaspartate with dihydroxyacetone phosphate to form quinolinate. This is Quinolinate synthase from Pyrobaculum aerophilum (strain ATCC 51768 / DSM 7523 / JCM 9630 / CIP 104966 / NBRC 100827 / IM2).